We begin with the raw amino-acid sequence, 113 residues long: Gonadotropin subunit beta (113 aa).

Cystine bridges form between Cys6–Cys54, Cys20–Cys69, Cys23–Cys107, Cys31–Cys85, Cys35–Cys87, and Cys90–Cys97. Asn10 carries an N-linked (GlcNAc...) asparagine glycan.

This sequence belongs to the glycoprotein hormones subunit beta family. In terms of assembly, heterodimer of an alpha and a beta chain.

The protein resides in the secreted. In terms of biological role, involved in gametogenesis and steroidogenesis. This Muraenesox cinereus (Daggertooth pike conger) protein is Gonadotropin subunit beta (cgb).